The chain runs to 413 residues: ATP phosphoribosyltransferase 2, chloroplastic (413 aa).

Residues 1-57 (MPISIPLNATLQYSSPSSSSSSSSLVPSSPLFSPIPSTTVSLTGIRQRCLRMVTSCV) constitute a chloroplast transit peptide.

The protein belongs to the ATP phosphoribosyltransferase family. Long subfamily. Requires Mg(2+) as cofactor.

Its subcellular location is the plastid. The protein resides in the chloroplast. It carries out the reaction 1-(5-phospho-beta-D-ribosyl)-ATP + diphosphate = 5-phospho-alpha-D-ribose 1-diphosphate + ATP. Its pathway is amino-acid biosynthesis; L-histidine biosynthesis; L-histidine from 5-phospho-alpha-D-ribose 1-diphosphate: step 1/9. With respect to regulation, feedback inhibited by L-histidine. Its function is as follows. Catalyzes the condensation of ATP and 5-phosphoribose 1-diphosphate to form N'-(5'-phosphoribosyl)-ATP (PR-ATP). This Arabidopsis thaliana (Mouse-ear cress) protein is ATP phosphoribosyltransferase 2, chloroplastic (HISN1B).